The primary structure comprises 236 residues: Aquaporin Z (236 aa).

The next 2 helical transmembrane spans lie at 12-32 and 37-57; these read FFGTFWLVLGGCGSAVLAAGV and IGYAGVALAFGLTVLTMAYAV. The NPA 1 motif lies at 66–68; sequence NPA. A run of 3 helical transmembrane segments spans residues 92–112, 136–156, and 163–183; these read VVGAIVAAATLASIAQGVAGF, AALICEIVLSAGFVFVILGAT, and GFAPIPIGLALTLIHLISIPV. Residues 189–191 carry the NPA 2 motif; that stretch reads NPA. A helical transmembrane segment spans residues 197–217; it reads ALFVGGWALEQLWLFWLAPIA.

It belongs to the MIP/aquaporin (TC 1.A.8) family. As to quaternary structure, homotetramer.

Its subcellular location is the cell inner membrane. It catalyses the reaction H2O(in) = H2O(out). In terms of biological role, channel that permits osmotically driven movement of water in both directions. It is involved in the osmoregulation and in the maintenance of cell turgor during volume expansion in rapidly growing cells. It mediates rapid entry or exit of water in response to abrupt changes in osmolarity. The chain is Aquaporin Z from Bordetella bronchiseptica (strain ATCC BAA-588 / NCTC 13252 / RB50) (Alcaligenes bronchisepticus).